Here is a 174-residue protein sequence, read N- to C-terminus: Secretory-abundant heat soluble protein 2 (174 aa).

A signal peptide spans 1–19; that stretch reads MHRFVLALVVFAGAAIVWA. Residues 30-60 form an SAHS-c1 region; the sequence is EWTGKPWMGKWESDPSKDENVEEFKKKLQLP. The tract at residues 77–105 is SAHS-c2; sequence YKKGDEYHHKIIINDAHYKNDIVFKLGQE. N111 is a glycosylation site (N-linked (GlcNAc...) asparagine). Residues 118–172 form an SAHS-c3 region; that stretch reads KYEDKDGALVGSVHYTGTKEQSLDKTINNVFKLEGDHLVKTSTIEGVTMKRHYNK.

It belongs to the Secretory-abundant heat soluble protein (SAHS) family.

The protein resides in the secreted. Its function is as follows. Secreted heat soluble protein acting as a molecular shield in water-deficient condition. Tardigrade-specific intrinsically disordered proteins (TDPs) are essential for desiccation tolerance by forming non-crystalline amorphous solids upon desiccation, and this vitrified state mirrors their protective capabilities. This is Secretory-abundant heat soluble protein 2 from Ramazzottius varieornatus (Water bear).